A 514-amino-acid chain; its full sequence is MSGKKAAARLMIQGTSSNVGKSVLAAAFCRIFYQEGYHVAPFKAQNMALNSFITRSGGEMGRAQVVQAQAAGLEPDVRMNPVLLKPTGHTGSQVIVLGKAQGTLSALKYHGDYQRKTWPIVEEALHELLEEHEIVVIEGAGSPAEVNLKQNDIVNMRVAKEAQAPVLLVADIDRGGALASVVGTLELLEPEERQLVQGIVMNKFRGDIKLLQPALDFLEERTGIPVVGVVPFYDQFKIPEEDSVVLEEQNTSKRDQGKSRDEALDVAVIRLPYLSNFTDFDPFEDEPDVILRYVREPSELGEPDCVIIPGSKNTLSDLRFLWESGLGEKIIKFWQEDVPIIGICGGYQMLGRIVRDPLGTESDLKEIAGLGILPMETEFELDKHTVQSRGKVVGGELFLARCQGTEITGYEIHMGRSQGEGHSLFEIEAQETAYGDGMSAGSAVGTYLHGIFDNDPLRTALLEWLWERRGGTRPVGETMSQAAIREQSFNELADWVRNSMDMEKIRAMMGLHKG.

Residues alanine 263 to leucine 457 form the GATase cobBQ-type domain. The active-site Nucleophile is cysteine 344. Histidine 449 is an active-site residue.

Belongs to the CobB/CobQ family. CobQ subfamily.

Its pathway is cofactor biosynthesis; adenosylcobalamin biosynthesis. Functionally, catalyzes amidations at positions B, D, E, and G on adenosylcobyrinic A,C-diamide. NH(2) groups are provided by glutamine, and one molecule of ATP is hydrogenolyzed for each amidation. The polypeptide is Cobyric acid synthase (Desulfitobacterium hafniense (strain DSM 10664 / DCB-2)).